A 532-amino-acid polypeptide reads, in one-letter code: Phosphoribosylamine--glycine ligase, chloroplastic (532 aa).

Residues 1-75 (MSSLCASNCY…IQRRLFLLRC (75 aa)) constitute a chloroplast transit peptide. The region spanning 204–412 (KNLCHKYNIP…LAKVLLAACK (209 aa)) is the ATP-grasp domain.

The protein belongs to the GARS family.

It localises to the plastid. The protein resides in the chloroplast. The catalysed reaction is 5-phospho-beta-D-ribosylamine + glycine + ATP = N(1)-(5-phospho-beta-D-ribosyl)glycinamide + ADP + phosphate + H(+). Its pathway is purine metabolism; IMP biosynthesis via de novo pathway; N(1)-(5-phospho-D-ribosyl)glycinamide from 5-phospho-alpha-D-ribose 1-diphosphate: step 2/2. This chain is Phosphoribosylamine--glycine ligase, chloroplastic (PUR2), found in Arabidopsis thaliana (Mouse-ear cress).